Consider the following 345-residue polypeptide: MNRYKEAGVDVTAGYDLVNRIKPLVAATKRKGVMGSIGSFGGMFDLEELGYKHPVLVSGTDGVGTKLMIAQKMHKNDTVGIDCVAMCVNDVLAQGAEPLFFLDYIACGHNDPERLADVVKGVAEGCKQSGSALIGGETAEMPDMYEPHEYDLAGFSTGIAEKEDLLSSSLAKAGDHLIALPSSGVHSNGFSLIRKILFKDHDVSLDDKPAELSGKTVGETLLTPTRIYIKAVLPLVKKHLIHGIAHITGGGFIENLPRIYDDNLQAVINKGSWPGLPIFDYLKKIGVLSDQDCYNTFNMGIGLVLAVSSENVDAVKEQLNTENEEFYEIGKLTARPAGKAKIVIE.

It belongs to the AIR synthase family.

Its subcellular location is the cytoplasm. It carries out the reaction 2-formamido-N(1)-(5-O-phospho-beta-D-ribosyl)acetamidine + ATP = 5-amino-1-(5-phospho-beta-D-ribosyl)imidazole + ADP + phosphate + H(+). It participates in purine metabolism; IMP biosynthesis via de novo pathway; 5-amino-1-(5-phospho-D-ribosyl)imidazole from N(2)-formyl-N(1)-(5-phospho-D-ribosyl)glycinamide: step 2/2. The sequence is that of Phosphoribosylformylglycinamidine cyclo-ligase from Lactobacillus acidophilus (strain ATCC 700396 / NCK56 / N2 / NCFM).